A 676-amino-acid polypeptide reads, in one-letter code: GRB2-associated-binding protein 2 (676 aa).

Serine 2 carries the post-translational modification Phosphoserine. Positions 6 to 117 (DVVCTGWLRK…WVQSICQICG (112 aa)) constitute a PH domain. The interval 127–178 (SLRNVSSAGHGPRSSPAELSSSSQHLLRERKSSAPSHSSQPTLFTFEPPVSN) is disordered. A phosphoserine mark is found at serine 133, serine 140, serine 141, serine 148, serine 149, serine 159, serine 164, serine 210, serine 218, serine 223, and serine 264. Residues 140–149 (SSPAELSSSS) show a composition bias toward low complexity. The span at 159–169 (SAPSHSSQPTL) shows a compositional bias: polar residues. Threonine 265 is subject to Phosphothreonine. Tyrosine 266 bears the Phosphotyrosine mark. Phosphothreonine is present on threonine 278. Serine 281 and serine 285 each carry phosphoserine. Threonine 287 is subject to Phosphothreonine. At tyrosine 293 the chain carries Phosphotyrosine. Threonine 331 bears the Phosphothreonine mark. Positions 341–430 (VATPGDSAIA…RSAESMSDGV (90 aa)) are disordered. The SH3-binding signature appears at 351–358 (PPPRPPKP). The residue at position 368 (serine 368) is a Phosphoserine. Phosphothreonine is present on residues threonine 385 and threonine 391. Serine 405 carries the post-translational modification Phosphoserine. At threonine 408 the chain carries Phosphothreonine. A phosphoserine mark is found at serine 422 and serine 425. Tyrosine 452 bears the Phosphotyrosine mark. Serine 480 is modified (phosphoserine). Positions 492–531 (PSTTLPVHRGPSRGSEIQPPPVNRNLKPDRKAKPTPLDLR) are disordered. The short motif at 510–519 (PPPVNRNLKP) is the SH3-binding element. Serine 543 carries the post-translational modification Phosphoserine. Polar residues-rich tracts occupy residues 556–577 (FNSS…STDS) and 589–611 (NPVS…STGS). 2 disordered regions span residues 556–643 (FNSS…KVDY) and 656–676 (NTMQ…GAKL). Serine 622 and serine 623 each carry phosphoserine. Position 643 is a phosphotyrosine (tyrosine 643). The segment covering 656-670 (NTMQEWTDVRQSSEP) has biased composition (polar residues).

The protein belongs to the GAB family. As to quaternary structure, part of a complex composed of EEIG1, TNFRSF11A/RANK, PLCG2, GAB2, TEC and BTK; complex formation increases in the presence of TNFSF11/RANKL. Interacts with SHC1; may mediate interaction with receptors. Interacts with SYK. Interacts with PI-3 kinase. Interacts with GRB2 (via SH3 2 domain). Interacts (phosphorylated) with PTPN11. Interacts with TNFRSF11A (via cytoplasmic domain). Interacts (phosphorylated) with 14-3-3 family proteins SFN, YWHAB, YWHAE, YWHAG, YWHAH, YWHAQ and YWHAZ; prevents interaction with GRB2 and attenuates GAB2 signaling. Interacts with HCK. Post-translationally, phosphorylated on tyrosine residue(s) by the thrombopoietin receptor (TPOR), stem cell factor receptor (SCFR), and T-cell and B-cell antigen receptors, gp130, IL-2R and IL-3R. Phosphorylated upon stimulation of TNFRSF11A/RANK by TNFSF11/RANKL. Phosphorylated upon EGF stimulation. Phosphorylated on tyrosine residues by HCK upon IL6 signaling. In terms of processing, dephosphorylated by PTPN11.

The protein resides in the cytoplasm. It localises to the cell membrane. The protein localises to the membrane raft. Functionally, adapter protein which acts downstream of several membrane receptors including cytokine, antigen, hormone, cell matrix and growth factor receptors to regulate multiple signaling pathways. Regulates osteoclast differentiation mediating the TNFRSF11A/RANK signaling. In allergic response, it plays a role in mast cells activation and degranulation through PI-3-kinase regulation. Also involved in the regulation of cell proliferation and hematopoiesis. This chain is GRB2-associated-binding protein 2 (GAB2), found in Homo sapiens (Human).